The following is a 172-amino-acid chain: Translation initiation factor IF-3 (172 aa).

The protein belongs to the IF-3 family. Monomer.

Its subcellular location is the cytoplasm. Functionally, IF-3 binds to the 30S ribosomal subunit and shifts the equilibrium between 70S ribosomes and their 50S and 30S subunits in favor of the free subunits, thus enhancing the availability of 30S subunits on which protein synthesis initiation begins. This chain is Translation initiation factor IF-3, found in Campylobacter concisus (strain 13826).